The chain runs to 89 residues: Small ribosomal subunit protein bS20 (89 aa).

Residues Met-1–Lys-12 are compositionally biased toward basic residues. Residues Met-1–Thr-22 are disordered.

It belongs to the bacterial ribosomal protein bS20 family.

Its function is as follows. Binds directly to 16S ribosomal RNA. This chain is Small ribosomal subunit protein bS20, found in Xanthomonas oryzae pv. oryzae (strain KACC10331 / KXO85).